Here is a 114-residue protein sequence, read N- to C-terminus: Small ribosomal subunit protein uS17 (114 aa).

It belongs to the universal ribosomal protein uS17 family. In terms of assembly, part of the 30S ribosomal subunit.

Functionally, one of the primary rRNA binding proteins, it binds specifically to the 5'-end of 16S ribosomal RNA. In Saccharolobus solfataricus (strain ATCC 35092 / DSM 1617 / JCM 11322 / P2) (Sulfolobus solfataricus), this protein is Small ribosomal subunit protein uS17.